The chain runs to 378 residues: Beta sliding clamp (378 aa).

Belongs to the beta sliding clamp family. Forms a ring-shaped head-to-tail homodimer around DNA which binds and tethers DNA polymerases and other proteins to the DNA. The DNA replisome complex has a single clamp-loading complex (3 tau and 1 each of delta, delta', psi and chi subunits) which binds 3 Pol III cores (1 core on the leading strand and 2 on the lagging strand) each with a beta sliding clamp dimer. Additional proteins in the replisome are other copies of gamma, psi and chi, Ssb, DNA helicase and RNA primase.

Its subcellular location is the cytoplasm. Its function is as follows. Confers DNA tethering and processivity to DNA polymerases and other proteins. Acts as a clamp, forming a ring around DNA (a reaction catalyzed by the clamp-loading complex) which diffuses in an ATP-independent manner freely and bidirectionally along dsDNA. Initially characterized for its ability to contact the catalytic subunit of DNA polymerase III (Pol III), a complex, multichain enzyme responsible for most of the replicative synthesis in bacteria; Pol III exhibits 3'-5' exonuclease proofreading activity. The beta chain is required for initiation of replication as well as for processivity of DNA replication. The polypeptide is Beta sliding clamp (dnaN) (Streptococcus pneumoniae (strain ATCC BAA-255 / R6)).